Here is a 612-residue protein sequence, read N- to C-terminus: 1-deoxy-D-xylulose-5-phosphate synthase (612 aa).

Residues His77 and Gly118 to Ser120 each bind thiamine diphosphate. Asp147 lines the Mg(2+) pocket. Thiamine diphosphate contacts are provided by residues Ala148–Ala149, Asn176, Tyr288, and Glu365. Asn176 lines the Mg(2+) pocket.

The protein belongs to the transketolase family. DXPS subfamily. As to quaternary structure, homodimer. Mg(2+) is required as a cofactor. Thiamine diphosphate serves as cofactor.

It catalyses the reaction D-glyceraldehyde 3-phosphate + pyruvate + H(+) = 1-deoxy-D-xylulose 5-phosphate + CO2. It participates in metabolic intermediate biosynthesis; 1-deoxy-D-xylulose 5-phosphate biosynthesis; 1-deoxy-D-xylulose 5-phosphate from D-glyceraldehyde 3-phosphate and pyruvate: step 1/1. Catalyzes the acyloin condensation reaction between C atoms 2 and 3 of pyruvate and glyceraldehyde 3-phosphate to yield 1-deoxy-D-xylulose-5-phosphate (DXP). The chain is 1-deoxy-D-xylulose-5-phosphate synthase from Malacoplasma penetrans (strain HF-2) (Mycoplasma penetrans).